Consider the following 1612-residue polypeptide: Phospholipid-transporting ATPase DNF2 (1612 aa).

The segment at 1-74 (MSSPSKPTSP…MKDISTPDLS (74 aa)) is disordered. At 1-252 (MSSPSKPTSP…TFFPKNILFQ (252 aa)) the chain is on the cytoplasmic side. Over residues 20 to 30 (GSASNGLSSMS) the composition is skewed to low complexity. Residue threonine 70 is modified to Phosphothreonine. Residue serine 85 is modified to Phosphoserine. Residues 253 to 273 (FHNFANIYFLILLILGAFQIF) form a helical membrane-spanning segment. An involved in phosphatidylcholine substrate selection region spans residues 272 to 279 (IFGVTNPG). Over 274–277 (GVTN) the chain is Extracellular. A helical transmembrane segment spans residues 278-298 (PGFASVPLIVIVIITAIKDGI). The Cytoplasmic segment spans residues 299–598 (EDSRRTVLDL…RISRELNFSV (300 aa)). Basic and acidic residues predominate over residues 364–373 (KLQKKREELR). The segment at 364 to 384 (KLQKKREELRRKRNSRSFGPR) is disordered. 4 positions are modified to phosphoserine: serine 389, serine 392, serine 396, and serine 403. Phosphotyrosine is present on tyrosine 406. The helical transmembrane segment at 599-619 (ILNFVLLFILCFTAGIVNGVY) threads the bilayer. Residues 620–639 (YKQKPRSRDYFEFGTIGGSA) are Extracellular-facing. The tract at residues 631 to 635 (EFGTI) is involved in phosphatidylcholine substrate selection. A helical transmembrane segment spans residues 640–660 (STNGFVSFWVAVILYQSLVPI). The Cytoplasmic segment spans residues 661–1231 (SLYISVEIIK…WCYKRLAEMI (571 aa)). The 4-aspartylphosphate intermediate role is filled by aspartate 712. Aspartate 712, lysine 713, and threonine 714 together coordinate ATP. Residue aspartate 712 coordinates Mg(2+). Threonine 714 serves as a coordination point for Mg(2+). Position 782 is a phosphothreonine (threonine 782). Positions 846, 887, 889, 892, and 916 each coordinate ATP. Residue lysine 938 forms a Glycyl lysine isopeptide (Lys-Gly) (interchain with G-Cter in ubiquitin) linkage. Residues arginine 952, threonine 953, threonine 1032, glycine 1033, aspartate 1034, arginine 1147, and lysine 1153 each contribute to the ATP site. Aspartate 1173 contacts Mg(2+). Positions 1176 and 1177 each coordinate ATP. Residue aspartate 1177 participates in Mg(2+) binding. A helical transmembrane segment spans residues 1232 to 1252 (PQFFYKNVIFTLSLFWYGIYN). Residues 1253-1262 (NFDGSYLFEY) lie on the Extracellular side of the membrane. The helical transmembrane segment at 1263–1283 (TYLTFYNLAFTSVPVILLAVL) threads the bilayer. The Cytoplasmic segment spans residues 1284–1313 (DQDVSDTVSMLVPQLYRVGILRKEWNQTKF). The helical transmembrane segment at 1314–1334 (LWYMLDGVYQSVICFFFPYLA) threads the bilayer. Residues 1335–1350 (YHKNMVVTENGLGLDH) lie on the Extracellular side of the membrane. Residues 1351–1371 (RYFVGVFVTAIAVTSCNFYVF) form a helical membrane-spanning segment. The Cytoplasmic portion of the chain corresponds to 1372–1377 (MEQYRW). The helical transmembrane segment at 1378–1398 (DWFCGLFICLSLAVFYGWTGI) threads the bilayer. Over 1399–1418 (WTSSSSSNEFYKGAARVFAQ) the chain is Extracellular. Residues 1419 to 1439 (PAYWAVLFVGVLFCLLPRFTI) form a helical membrane-spanning segment. Position 1436 (arginine 1436) interacts with a 1,2-diacyl-sn-glycero-3-phospho-L-serine. Residues 1440–1612 (DCIRKIFYPK…TLLSQRSRDR (173 aa)) lie on the Cytoplasmic side of the membrane. Residue serine 1542 is modified to Phosphoserine. Positions 1544–1563 (VTTTNNLPRRSMASARGNKL) are disordered. Serine 1592 is subject to Phosphoserine.

This sequence belongs to the cation transport ATPase (P-type) (TC 3.A.3) family. Type IV subfamily. Component of a flippase complex consisting of DNF1 and LEM3. Interacts with LEM3; the interaction is direct. It depends on Mg(2+) as a cofactor. In terms of processing, phosphorylated by FPK1 and KIN82.

The protein localises to the cell membrane. It carries out the reaction ATP + H2O + phospholipidSide 1 = ADP + phosphate + phospholipidSide 2.. The enzyme catalyses a 1,2-diacyl-sn-glycero-3-phosphoethanolamine(out) + ATP + H2O = a 1,2-diacyl-sn-glycero-3-phosphoethanolamine(in) + ADP + phosphate + H(+). It catalyses the reaction a 1,2-diacyl-sn-glycero-3-phosphocholine(out) + ATP + H2O = a 1,2-diacyl-sn-glycero-3-phosphocholine(in) + ADP + phosphate + H(+). The catalysed reaction is a beta-D-glucosyl-(1&lt;-&gt;1')-N-acylsphing-4-enine(out) + ATP + H2O = a beta-D-glucosyl-(1&lt;-&gt;1')-N-acylsphing-4-enine(in) + ADP + phosphate + H(+). It carries out the reaction a 1,2-diacyl-sn-glycero-3-phospho-L-serine(out) + ATP + H2O = a 1,2-diacyl-sn-glycero-3-phospho-L-serine(in) + ADP + phosphate + H(+). With respect to regulation, phosphatidylcholine flippase activity is inhibited by glucosylsphingosine, lactosylsphingosine, lysophosphatidylcholine and to a lesser degree sphingosine-1-phosphate and lysosphingomyelin. Glucosylceramide flippase activity is inhibited by lysophosphatidylcholine, glucosylsphingosine and to a lesser degree lactosylsphingosine whereas lysosphingomyelin has a stimulatory effect at low concentrations. Its function is as follows. Catalytic component of a P4-ATPase flippase complex which catalyzes the hydrolysis of ATP coupled to the transport of glucosylceramide, phosphatidylcholine, phosphatidylethanolamine, and small amounts of phosphatidylserine from the lumenal to the cytosolic leaflet of the cell membrane and ensures the maintenance of asymmetric distribution of phospholipids. Does not appear to transport sphingomyelin, inositol phosphoceramide or phosphatidic acid. Required for efficient endocytosis. Required for protein transport from Golgi to vacuoles. The sequence is that of Phospholipid-transporting ATPase DNF2 (DNF2) from Saccharomyces cerevisiae (strain ATCC 204508 / S288c) (Baker's yeast).